The primary structure comprises 177 residues: Alkyl hydroperoxide reductase AhpD (177 aa).

Residue C130 is the Proton donor of the active site. C130 and C133 are disulfide-bonded. Residue C133 is the Cysteine sulfenic acid (-SOH) intermediate of the active site.

The protein belongs to the AhpD family. As to quaternary structure, homotrimer.

It catalyses the reaction N(6)-[(R)-dihydrolipoyl]-L-lysyl-[lipoyl-carrier protein] + a hydroperoxide = N(6)-[(R)-lipoyl]-L-lysyl-[lipoyl-carrier protein] + an alcohol + H2O. Functionally, antioxidant protein with alkyl hydroperoxidase activity. Required for the reduction of the AhpC active site cysteine residues and for the regeneration of the AhpC enzyme activity. This Corynebacterium aurimucosum (strain ATCC 700975 / DSM 44827 / CIP 107346 / CN-1) (Corynebacterium nigricans) protein is Alkyl hydroperoxide reductase AhpD.